Consider the following 150-residue polypeptide: Flagellar assembly factor FliW (150 aa).

It belongs to the FliW family. In terms of assembly, interacts with translational regulator CsrA and flagellin(s).

The protein localises to the cytoplasm. In terms of biological role, acts as an anti-CsrA protein, binds CsrA and prevents it from repressing translation of its target genes, one of which is flagellin. Binds to flagellin and participates in the assembly of the flagellum. The protein is Flagellar assembly factor FliW of Leptospira interrogans serogroup Icterohaemorrhagiae serovar copenhageni (strain Fiocruz L1-130).